Reading from the N-terminus, the 188-residue chain is Dual specificity protein phosphatase 18 (188 aa).

The Tyrosine-protein phosphatase domain maps to 19 to 160 (GLSQITSSLY…LIHYEFQLFG (142 aa)). The segment at 95-141 (MKQGRTLLHCAAGVSRSAALCLAYLMKYHAMSLLDAHTWTKSCRPII) is sufficient for mitochondrial localization. Cys104 acts as the Phosphocysteine intermediate in catalysis.

It belongs to the protein-tyrosine phosphatase family. Non-receptor class dual specificity subfamily.

Its subcellular location is the cytoplasm. It localises to the nucleus. The protein resides in the mitochondrion inner membrane. The enzyme catalyses O-phospho-L-tyrosyl-[protein] + H2O = L-tyrosyl-[protein] + phosphate. It catalyses the reaction O-phospho-L-seryl-[protein] + H2O = L-seryl-[protein] + phosphate. The catalysed reaction is O-phospho-L-threonyl-[protein] + H2O = L-threonyl-[protein] + phosphate. In terms of biological role, can dephosphorylate single and diphosphorylated synthetic MAPK peptides, with preference for the phosphotyrosine and diphosphorylated forms over phosphothreonine. In vitro, dephosphorylates p-nitrophenyl phosphate (pNPP). The polypeptide is Dual specificity protein phosphatase 18 (DUSP18) (Bos taurus (Bovine)).